The sequence spans 168 residues: MTNQILSNDDWGRYKKEGFLVTKFGDLTDYVMNWARSGSLWPMTFGLACCAVEMMHTASSRYDLDRYGIMFRASPRQSDVMIVAGTLTNKMAAALRKVYDQMADPKYVISMGSCANGGGYYHYSYSVVRGCDRIVPVDVYVPGCPPTAEALLYGMLCLQNKIKRTRNG.

[4Fe-4S] cluster is bound by residues Cys49, Cys50, Cys114, and Cys144.

This sequence belongs to the complex I 20 kDa subunit family. As to quaternary structure, NDH-1 is composed of 14 different subunits. Subunits NuoB, C, D, E, F, and G constitute the peripheral sector of the complex. Requires [4Fe-4S] cluster as cofactor.

It is found in the cell membrane. It catalyses the reaction a quinone + NADH + 5 H(+)(in) = a quinol + NAD(+) + 4 H(+)(out). In terms of biological role, NDH-1 shuttles electrons from NADH, via FMN and iron-sulfur (Fe-S) centers, to quinones in the respiratory chain. Couples the redox reaction to proton translocation (for every two electrons transferred, four hydrogen ions are translocated across the cytoplasmic membrane), and thus conserves the redox energy in a proton gradient. The sequence is that of NADH-quinone oxidoreductase subunit B from Wolbachia pipientis wMel.